Reading from the N-terminus, the 29-residue chain is Phospholemman-like protein (29 aa).

It belongs to the FXYD family. Phosphorylated by protein kinase C.

The protein localises to the membrane. Its function is as follows. Induces a hyperpolarization-activated chloride current when expressed in Xenopus oocytes. The protein is Phospholemman-like protein of Scyliorhinus canicula (Small-spotted catshark).